The chain runs to 432 residues: MSKIVKIIGREIIDSRGNPTVEAEVHLEGGFVGMAAAPSGASTGSREALELRDGDKSRFLGKGVTKAVAAVNGPIAQALIGKDAKDQAGIDKIMIDLDGTENKSKFGANAILAVSLANAKAAAAAKGMPLYEHIAELNGTPGKYSMPVPMMNIINGGEHADNNVDIQEFMIQPVGAKTVKEAIRMGSEVFHHLAKVLKAKGMNTAVGDEGGYAPNLGSNAEALAVIAEAVKAAGYELGKDITLAMDCAASEFYKDGKYVLAGEGNKAFTSEEFTHFLEELTKQYPIVSIEDGLDESDWDGFAYQTKVLGDKIQLVGDDLFVTNTKILKEGIEKGIANSILIKFNQIGSLTETLAAIKMAKDAGYTAVISHRSGETEDATIADLAVGTAAGQIKTGSMSRSDRVAKYNQLIRIEEALGEKAPYNGRKEIKGQA.

Position 167 (glutamine 167) interacts with (2R)-2-phosphoglycerate. Glutamate 209 functions as the Proton donor in the catalytic mechanism. 3 residues coordinate Mg(2+): aspartate 246, glutamate 290, and aspartate 317. The (2R)-2-phosphoglycerate site is built by lysine 342, arginine 371, serine 372, and lysine 393. Residue lysine 342 is the Proton acceptor of the active site.

Belongs to the enolase family. As to quaternary structure, component of the RNA degradosome, a multiprotein complex involved in RNA processing and mRNA degradation. Requires Mg(2+) as cofactor.

Its subcellular location is the cytoplasm. It localises to the secreted. It is found in the cell surface. It carries out the reaction (2R)-2-phosphoglycerate = phosphoenolpyruvate + H2O. It participates in carbohydrate degradation; glycolysis; pyruvate from D-glyceraldehyde 3-phosphate: step 4/5. Catalyzes the reversible conversion of 2-phosphoglycerate (2-PG) into phosphoenolpyruvate (PEP). It is essential for the degradation of carbohydrates via glycolysis. The polypeptide is Enolase (Escherichia coli O139:H28 (strain E24377A / ETEC)).